The following is a 695-amino-acid chain: Sodium-dependent phosphate transport protein 2B (695 aa).

The interval 1 to 44 (MAPWPELENAHPNPNKFIEGASGPQSSIPDKDKGTSKTNDSGTP) is disordered. Residues 1 to 90 (MAPWPELENA…KWSERDSKGK (90 aa)) lie on the Cytoplasmic side of the membrane. A helical membrane pass occupies residues 91 to 111 (ILCIFQGIGKFILLLGFLYLF). The Extracellular segment spans residues 112–136 (VCSLDVLSSAFQLVGGKMAGQFFSN). The helical transmembrane segment at 137 to 157 (NSIMSNPVAGLVIGVLVTVMV) threads the bilayer. The Cytoplasmic portion of the chain corresponds to 158–213 (QSSSTSSSIIVSMVASSLLSVRAAIPIIMGANIGTSITNTIVALMQAGDRNEFRRA). The helical transmembrane segment at 214-234 (FAGATVHDFFNWLSVLVLLPL) threads the bilayer. Residues 235–363 (EAATHYLEKL…FVNFSLPDLA (129 aa)) are Extracellular-facing. N-linked (GlcNAc...) asparagine glycans are attached at residues Asn-295, Asn-313, Asn-321, Asn-340, and Asn-356. A disulfide bridge connects residues Cys-303 and Cys-350. Residues 364–384 (VGIILLTVSLLILCGCLIMIV) form a helical membrane-spanning segment. The Cytoplasmic portion of the chain corresponds to 385 to 408 (KLLGSVLRGQVATVIKKTLNTDFP). The helical transmembrane segment at 409 to 429 (FPFAWLTGYLAILVGAGMTFI) threads the bilayer. The Extracellular segment spans residues 430–486 (VQSSSVFTSAMTPLIGIGVISIERAYPLTLGSNIGTTTTAILAALASPGNTLRSSLQ). The chain crosses the membrane as a helical span at residues 487 to 507 (IALCHFFFNISGILLWYPIPF). Topologically, residues 508-526 (TRLPIRLAKGLGNISAKYR) are cytoplasmic. Residues 527–547 (WFAVFYLIFFFLLTPLTVFGL) form a helical membrane-spanning segment. At 548–551 (SLAG) the chain is on the extracellular side. The chain crosses the membrane as a helical span at residues 552–572 (WPVLVGVGVPIILLILLVLCL). The Cytoplasmic portion of the chain corresponds to 573–695 (RMLQARCPRI…MKALSNTTVF (123 aa)).

Belongs to the SLC34A transporter family. In terms of tissue distribution, highly expressed in the lung, in type II alveolar cells. Moderately expressed in kidney followed by small intestine.

Its subcellular location is the apical cell membrane. The catalysed reaction is 3 Na(+)(out) + phosphate(out) = 3 Na(+)(in) + phosphate(in). Involved in actively transporting phosphate into cells via Na(+) cotransport. This Rattus norvegicus (Rat) protein is Sodium-dependent phosphate transport protein 2B (Slc34a2).